Consider the following 385-residue polypeptide: Homoserine O-succinyltransferase (385 aa).

The 311-residue stretch at 45–355 folds into the AB hydrolase-1 domain; it reads NAVLVCHALN…SHGHDAFLLD (311 aa). Residue S151 is the Nucleophile of the active site. R221 is a binding site for substrate. Catalysis depends on residues D316 and H349. D350 provides a ligand contact to substrate.

This sequence belongs to the AB hydrolase superfamily. MetX family. In terms of assembly, homodimer.

It is found in the cytoplasm. It catalyses the reaction L-homoserine + succinyl-CoA = O-succinyl-L-homoserine + CoA. It functions in the pathway amino-acid biosynthesis; L-methionine biosynthesis via de novo pathway; O-succinyl-L-homoserine from L-homoserine: step 1/1. Functionally, transfers a succinyl group from succinyl-CoA to L-homoserine, forming succinyl-L-homoserine. The chain is Homoserine O-succinyltransferase from Herminiimonas arsenicoxydans.